The primary structure comprises 281 residues: NADPH-dependent 7-cyano-7-deazaguanine reductase (281 aa).

Residue 81-83 participates in substrate binding; the sequence is VES. Residue 83-84 participates in NADPH binding; the sequence is SK. The active-site Thioimide intermediate is the Cys188. The active-site Proton donor is Asp195. 227-228 is a substrate binding site; it reads HE. 256-257 provides a ligand contact to NADPH; that stretch reads RG.

It belongs to the GTP cyclohydrolase I family. QueF type 2 subfamily. As to quaternary structure, homodimer.

Its subcellular location is the cytoplasm. The catalysed reaction is 7-aminomethyl-7-carbaguanine + 2 NADP(+) = 7-cyano-7-deazaguanine + 2 NADPH + 3 H(+). The protein operates within tRNA modification; tRNA-queuosine biosynthesis. Its function is as follows. Catalyzes the NADPH-dependent reduction of 7-cyano-7-deazaguanine (preQ0) to 7-aminomethyl-7-deazaguanine (preQ1). In Acidovorax ebreus (strain TPSY) (Diaphorobacter sp. (strain TPSY)), this protein is NADPH-dependent 7-cyano-7-deazaguanine reductase.